A 98-amino-acid chain; its full sequence is YcgL domain-containing protein CJA_2437 (98 aa).

The 85-residue stretch at 3–87 (IIAEIYRSPK…RDLVDAEAKR (85 aa)) folds into the YcgL domain.

The protein is YcgL domain-containing protein CJA_2437 of Cellvibrio japonicus (strain Ueda107) (Pseudomonas fluorescens subsp. cellulosa).